The following is a 340-amino-acid chain: Anthranilate phosphoribosyltransferase (340 aa).

5-phospho-alpha-D-ribose 1-diphosphate contacts are provided by residues glycine 78, 81–82, threonine 86, 88–91, 106–114, and serine 118; these read GD, NIST, and KHGNRSVSS. Position 78 (glycine 78) interacts with anthranilate. A Mg(2+)-binding site is contributed by serine 90. Residue asparagine 109 coordinates anthranilate. Arginine 164 is a binding site for anthranilate. Aspartate 223 and glutamate 224 together coordinate Mg(2+).

The protein belongs to the anthranilate phosphoribosyltransferase family. In terms of assembly, homodimer. It depends on Mg(2+) as a cofactor.

It carries out the reaction N-(5-phospho-beta-D-ribosyl)anthranilate + diphosphate = 5-phospho-alpha-D-ribose 1-diphosphate + anthranilate. The protein operates within amino-acid biosynthesis; L-tryptophan biosynthesis; L-tryptophan from chorismate: step 2/5. In terms of biological role, catalyzes the transfer of the phosphoribosyl group of 5-phosphorylribose-1-pyrophosphate (PRPP) to anthranilate to yield N-(5'-phosphoribosyl)-anthranilate (PRA). This chain is Anthranilate phosphoribosyltransferase, found in Bacillus pumilus (Bacillus mesentericus).